A 356-amino-acid chain; its full sequence is Peptide chain release factor 1 (356 aa).

N5-methylglutamine is present on Gln234.

It belongs to the prokaryotic/mitochondrial release factor family. In terms of processing, methylated by PrmC. Methylation increases the termination efficiency of RF1.

The protein localises to the cytoplasm. Its function is as follows. Peptide chain release factor 1 directs the termination of translation in response to the peptide chain termination codons UAG and UAA. In Parafrankia sp. (strain EAN1pec), this protein is Peptide chain release factor 1.